The sequence spans 551 residues: Putative hydroxymethylpyrimidine/phosphomethylpyrimidine kinase 2 (551 aa).

Glu-76 provides a ligand contact to 4-amino-5-hydroxymethyl-2-methylpyrimidine.

In the N-terminal section; belongs to the ThiD family. It in the C-terminal section; belongs to the thiaminase-2 family.

It is found in the cytoplasm. It carries out the reaction 4-amino-5-hydroxymethyl-2-methylpyrimidine + ATP = 4-amino-2-methyl-5-(phosphooxymethyl)pyrimidine + ADP + H(+). It catalyses the reaction 4-amino-2-methyl-5-(phosphooxymethyl)pyrimidine + ATP = 4-amino-2-methyl-5-(diphosphooxymethyl)pyrimidine + ADP. It functions in the pathway cofactor biosynthesis; thiamine diphosphate biosynthesis; 4-amino-2-methyl-5-diphosphomethylpyrimidine from 5-amino-1-(5-phospho-D-ribosyl)imidazole: step 2/3. Its pathway is cofactor biosynthesis; thiamine diphosphate biosynthesis; 4-amino-2-methyl-5-diphosphomethylpyrimidine from 5-amino-1-(5-phospho-D-ribosyl)imidazole: step 3/3. Catalyzes the phosphorylation of hydroxymethylpyrimidine phosphate (HMP-P) to HMP-PP, and of HMP to HMP-P. The protein is Putative hydroxymethylpyrimidine/phosphomethylpyrimidine kinase 2 of Schizosaccharomyces pombe (strain 972 / ATCC 24843) (Fission yeast).